We begin with the raw amino-acid sequence, 438 residues long: POU domain, class 3, transcription factor 3-A (438 aa).

Disordered stretches follow at residues 22–43 (VHSE…SVSG), 102–172 (SPWS…QSQQ), and 186–248 (GMLN…PTSD). Composition is skewed to polar residues over residues 103-123 (PWSS…VKSS) and 146-159 (QSHQ…TASH). Low complexity predominate over residues 160–172 (ISTITGGQQQSQQ). Over residues 210–230 (HHHHHHHQQQHPHHHHHHQHH) the composition is skewed to basic residues. Residues 242–316 (EDTPTSDDLE…LLNKWLEEAD (75 aa)) form the POU-specific domain. The segment at residues 334–393 (KRKKRTSIEVSVKGALESHFLKCPKPSAQEITSLADNLQLEKEVVRVWFCNRRQKEKRMT) is a DNA-binding region (homeobox).

The protein belongs to the POU transcription factor family. Class-3 subfamily. In terms of tissue distribution, predominantly expressed in the embryonic and adult central nervous system. In adults, isoform 2 is expressed in the brain, ovary, basal cells of the skin and muscle satellite cells.

The protein resides in the nucleus. Functionally, transcription factor that may play important roles in patterning the embryonic brain. The chain is POU domain, class 3, transcription factor 3-A (pou3f3a) from Danio rerio (Zebrafish).